Reading from the N-terminus, the 297-residue chain is Acetylglutamate kinase (297 aa).

Substrate-binding positions include 70–71 (GG), arginine 92, and asparagine 194.

This sequence belongs to the acetylglutamate kinase family. ArgB subfamily.

The protein resides in the cytoplasm. It carries out the reaction N-acetyl-L-glutamate + ATP = N-acetyl-L-glutamyl 5-phosphate + ADP. The protein operates within amino-acid biosynthesis; L-arginine biosynthesis; N(2)-acetyl-L-ornithine from L-glutamate: step 2/4. In terms of biological role, catalyzes the ATP-dependent phosphorylation of N-acetyl-L-glutamate. The polypeptide is Acetylglutamate kinase (Janthinobacterium sp. (strain Marseille) (Minibacterium massiliensis)).